Consider the following 118-residue polypeptide: Small ribosomal subunit protein uS13 (118 aa).

Residues S94–K118 form a disordered region.

The protein belongs to the universal ribosomal protein uS13 family. As to quaternary structure, part of the 30S ribosomal subunit. Forms a loose heterodimer with protein S19. Forms two bridges to the 50S subunit in the 70S ribosome.

Located at the top of the head of the 30S subunit, it contacts several helices of the 16S rRNA. In the 70S ribosome it contacts the 23S rRNA (bridge B1a) and protein L5 of the 50S subunit (bridge B1b), connecting the 2 subunits; these bridges are implicated in subunit movement. Contacts the tRNAs in the A and P-sites. The protein is Small ribosomal subunit protein uS13 of Shewanella denitrificans (strain OS217 / ATCC BAA-1090 / DSM 15013).